Reading from the N-terminus, the 173-residue chain is PTS system glucose-specific EIIA component (173 aa).

A PTS EIIA type-1 domain is found at 40 to 144 (DPTFAQKMMG…STVTPVVVTN (105 aa)). 2 residues coordinate Zn(2+): H77 and H92. Residue H92 is the Tele-phosphohistidine intermediate; for EIIA activity of the active site. A Phosphohistidine; by HPr modification is found at H92.

In terms of assembly, heterodimer with glycerol kinase (glpk). The cofactor is Zn(2+).

The protein localises to the cytoplasm. Functionally, the phosphoenolpyruvate-dependent sugar phosphotransferase system (sugar PTS), a major carbohydrate active transport system, catalyzes the phosphorylation of incoming sugar substrates concomitantly with their translocation across the cell membrane. The enzyme II complex composed of PtsG and Crr is involved in glucose transport. This chain is PTS system glucose-specific EIIA component (crr), found in Halalkalibacterium halodurans (strain ATCC BAA-125 / DSM 18197 / FERM 7344 / JCM 9153 / C-125) (Bacillus halodurans).